The primary structure comprises 663 residues: DNA ligase (663 aa).

Residues 33 to 37 (DYSYD), 82 to 83 (SI), and Glu-112 contribute to the NAD(+) site. The N6-AMP-lysine intermediate role is filled by Lys-114. The NAD(+) site is built by Arg-135, Glu-171, Lys-285, and Lys-309. Residues Cys-403, Cys-406, Cys-419, and Cys-424 each coordinate Zn(2+). The BRCT domain occupies 581 to 663 (DKEAPLQGKV…LRILDAKSVS (83 aa)).

The protein belongs to the NAD-dependent DNA ligase family. LigA subfamily. The cofactor is Mg(2+). Mn(2+) is required as a cofactor.

It carries out the reaction NAD(+) + (deoxyribonucleotide)n-3'-hydroxyl + 5'-phospho-(deoxyribonucleotide)m = (deoxyribonucleotide)n+m + AMP + beta-nicotinamide D-nucleotide.. Its function is as follows. DNA ligase that catalyzes the formation of phosphodiester linkages between 5'-phosphoryl and 3'-hydroxyl groups in double-stranded DNA using NAD as a coenzyme and as the energy source for the reaction. It is essential for DNA replication and repair of damaged DNA. The protein is DNA ligase of Chlamydia trachomatis serovar A (strain ATCC VR-571B / DSM 19440 / HAR-13).